The chain runs to 260 residues: NAD-capped RNA hydrolase NudC (260 aa).

Substrate is bound by residues K25 and R69. C98 and C101 together coordinate Zn(2+). E111 is a binding site for substrate. Zn(2+) contacts are provided by C116 and C119. A substrate-binding site is contributed by Y124. Residues 125 to 248 (PQIAPCVIVA…TVARRLIEDT (124 aa)) form the Nudix hydrolase domain. 3 residues coordinate a divalent metal cation: A158, E174, and E178. A Nudix box motif is present at residues 159–180 (GFVEVGETLEQAVSREVLEESN). A substrate-binding site is contributed by 192 to 199 (QPWPFPHS). Residue E219 participates in a divalent metal cation binding. A241 lines the substrate pocket.

The protein belongs to the Nudix hydrolase family. NudC subfamily. In terms of assembly, homodimer. Mg(2+) is required as a cofactor. It depends on Mn(2+) as a cofactor. Requires Zn(2+) as cofactor.

It catalyses the reaction a 5'-end NAD(+)-phospho-ribonucleoside in mRNA + H2O = a 5'-end phospho-adenosine-phospho-ribonucleoside in mRNA + beta-nicotinamide D-ribonucleotide + 2 H(+). The catalysed reaction is NAD(+) + H2O = beta-nicotinamide D-ribonucleotide + AMP + 2 H(+). It carries out the reaction NADH + H2O = reduced beta-nicotinamide D-ribonucleotide + AMP + 2 H(+). MRNA decapping enzyme that specifically removes the nicotinamide adenine dinucleotide (NAD) cap from a subset of mRNAs by hydrolyzing the diphosphate linkage to produce nicotinamide mononucleotide (NMN) and 5' monophosphate mRNA. The NAD-cap is present at the 5'-end of some mRNAs and stabilizes RNA against 5'-processing. Has preference for mRNAs with a 5'-end purine. Catalyzes the hydrolysis of a broad range of dinucleotide pyrophosphates. The sequence is that of NAD-capped RNA hydrolase NudC from Yersinia pseudotuberculosis serotype O:1b (strain IP 31758).